The following is a 320-amino-acid chain: MNHYDQYQKYKKKYLDLKNQLNNSSQYGGNCGNYGNNQFNNQFNSQATNRYQTGGAEFDLKDEVAFWGRQMMEHLLLLHLGLDEEELKNSALQNHMDWKRYLTENFFSKGVNPGPDQAFLTTNELEKIGLLNKNVVNGLIDQTIQYKSKLVKTLNSGQWVGWIYPAMAQHMLEEAEYFKRKVNGPDYTPEQETKFVVHHHSTEMGATTQLLDPTEKDNIKIAKSYADICMSKLSGRNKKPFPNQWTSQEEAILRGQDPVDLATLMRISLKYSRELTQFAKETGQKIDSKQLKSIIHPVLAHHIFREFYRFTKRLEQLGAQ.

Residues M1 to Q26 are a coiled coil.

Its subcellular location is the virion. This is an uncharacterized protein from Acanthamoeba polyphaga mimivirus (APMV).